The following is a 332-amino-acid chain: Heterogeneous nuclear ribonucleoprotein A/B (332 aa).

A disordered region spans residues 1–66 (MSEAGEEQPM…DQINASKNEE (66 aa)). Low complexity predominate over residues 29-49 (GRGWTGAAAGAGGATAAPPSG). 2 consecutive RRM domains span residues 69–154 (GKMF…PVKK) and 153–233 (KKIF…QPKE). Serine 81 bears the Phosphoserine mark. Glycyl lysine isopeptide (Lys-Gly) (interchain with G-Cter in SUMO2) cross-links involve residues lysine 130 and lysine 203. Lysine 215 is modified (N6-acetyllysine). The tract at residues 235-268 (YQQQQYGSGGRGNRNRGNRGSGGGGGGGGQSQSW) is disordered. At serine 242 the chain carries Phosphoserine. Residue arginine 245 is modified to Dimethylated arginine; alternate. At arginine 245 the chain carries Omega-N-methylarginine; alternate. An omega-N-methylarginine mark is found at arginine 250, glycine 251, arginine 253, and glycine 254. Residues 253 to 264 (RGSGGGGGGGGQ) show a composition bias toward gly residues. Phosphoserine occurs at positions 255 and 256. Glycine 271, tyrosine 272, and lysine 318 each carry N6-acetyllysine. The segment at 311-332 (QGSTNYGKSQRRGGHQNNYKPY) is disordered. Arginine 322 is subject to Dimethylated arginine; alternate. Arginine 322 is subject to Omega-N-methylarginine; alternate. Arginine 322 is subject to Asymmetric dimethylarginine; alternate.

In terms of assembly, identified in a IGF2BP1-dependent mRNP granule complex containing untranslated mRNAs. Interacts with APOBEC1. Dimethylation at Arg-322 is probably asymmetric. In terms of tissue distribution, ubiquitous.

Its subcellular location is the nucleus. The protein resides in the cytoplasm. In terms of biological role, binds single-stranded RNA. Has a high affinity for G-rich and U-rich regions of hnRNA. Also binds to APOB mRNA transcripts around the RNA editing site. In Homo sapiens (Human), this protein is Heterogeneous nuclear ribonucleoprotein A/B (HNRNPAB).